Reading from the N-terminus, the 299-residue chain is 4-diphosphocytidyl-2-C-methyl-D-erythritol kinase (299 aa).

Lysine 11 is an active-site residue. 94 to 104 (PQGGGLGGGSS) contacts ATP. Residue aspartate 136 is part of the active site.

The protein belongs to the GHMP kinase family. IspE subfamily.

The enzyme catalyses 4-CDP-2-C-methyl-D-erythritol + ATP = 4-CDP-2-C-methyl-D-erythritol 2-phosphate + ADP + H(+). Its pathway is isoprenoid biosynthesis; isopentenyl diphosphate biosynthesis via DXP pathway; isopentenyl diphosphate from 1-deoxy-D-xylulose 5-phosphate: step 3/6. Its function is as follows. Catalyzes the phosphorylation of the position 2 hydroxy group of 4-diphosphocytidyl-2C-methyl-D-erythritol. The polypeptide is 4-diphosphocytidyl-2-C-methyl-D-erythritol kinase (Bordetella bronchiseptica (strain ATCC BAA-588 / NCTC 13252 / RB50) (Alcaligenes bronchisepticus)).